A 1059-amino-acid polypeptide reads, in one-letter code: Carbamoyl phosphate synthase large chain (1059 aa).

Residues 1–401 form a carboxyphosphate synthetic domain region; it reads MPKRQDISKI…AMLKAVRSLE (401 aa). ATP-binding residues include Arg129, Arg169, Gly175, Gly176, Arg208, Ile210, Glu215, Gly241, Ile242, His243, Gln284, and Glu298. The ATP-grasp 1 domain occupies 133–327; sequence KALMERLNEP…IAKMAAKIAV (195 aa). Gln284, Glu298, and Asn300 together coordinate Mg(2+). Residues Gln284, Glu298, and Asn300 each contribute to the Mn(2+) site. Residues 402–546 are oligomerization domain; sequence IGAIGLDDIT…YATYEQENES (145 aa). The tract at residues 547-929 is carbamoyl phosphate synthetic domain; that stretch reads IISTKKSVLV…ALYKAFIASN (383 aa). In terms of domain architecture, ATP-grasp 2 spans 671-861; it reads DQVIKELALP…LAQLATRVML (191 aa). Arg707, Ser746, Leu748, Glu752, Gly777, Val778, His779, Ser780, Gln820, and Glu832 together coordinate ATP. Mg(2+) is bound by residues Gln820, Glu832, and Asn834. Positions 820, 832, and 834 each coordinate Mn(2+). The MGS-like domain occupies 930–1059; the sequence is IKVPRYGNVL…SRSFTVKEMH (130 aa). The interval 930 to 1059 is allosteric domain; it reads IKVPRYGNVL…SRSFTVKEMH (130 aa).

This sequence belongs to the CarB family. In terms of assembly, composed of two chains; the small (or glutamine) chain promotes the hydrolysis of glutamine to ammonia, which is used by the large (or ammonia) chain to synthesize carbamoyl phosphate. Tetramer of heterodimers (alpha,beta)4. Requires Mg(2+) as cofactor. Mn(2+) serves as cofactor.

The enzyme catalyses hydrogencarbonate + L-glutamine + 2 ATP + H2O = carbamoyl phosphate + L-glutamate + 2 ADP + phosphate + 2 H(+). The catalysed reaction is hydrogencarbonate + NH4(+) + 2 ATP = carbamoyl phosphate + 2 ADP + phosphate + 2 H(+). It functions in the pathway amino-acid biosynthesis; L-arginine biosynthesis; carbamoyl phosphate from bicarbonate: step 1/1. It participates in pyrimidine metabolism; UMP biosynthesis via de novo pathway; (S)-dihydroorotate from bicarbonate: step 1/3. Large subunit of the glutamine-dependent carbamoyl phosphate synthetase (CPSase). CPSase catalyzes the formation of carbamoyl phosphate from the ammonia moiety of glutamine, carbonate, and phosphate donated by ATP, constituting the first step of 2 biosynthetic pathways, one leading to arginine and/or urea and the other to pyrimidine nucleotides. The large subunit (synthetase) binds the substrates ammonia (free or transferred from glutamine from the small subunit), hydrogencarbonate and ATP and carries out an ATP-coupled ligase reaction, activating hydrogencarbonate by forming carboxy phosphate which reacts with ammonia to form carbamoyl phosphate. This chain is Carbamoyl phosphate synthase large chain, found in Leuconostoc mesenteroides subsp. mesenteroides (strain ATCC 8293 / DSM 20343 / BCRC 11652 / CCM 1803 / JCM 6124 / NCDO 523 / NBRC 100496 / NCIMB 8023 / NCTC 12954 / NRRL B-1118 / 37Y).